Here is a 116-residue protein sequence, read N- to C-terminus: Mitochondrial import inner membrane translocase subunit PAM16 like 2 (116 aa).

The transit peptide at 1–27 (MAGRLLANLIVMGSGIIGRAVFQAYRQ) directs the protein to the mitochondrion. A J-like region spans residues 57 to 106 (EARQILGVTEKTSWEEILQKYDKLFENNAKAGSFYLQSKVHRAKECLEVV).

The protein belongs to the TIM16/PAM16 family. In terms of tissue distribution, expressed constitutively and ubiquitously, except in root tips, at low levels.

The protein resides in the mitochondrion inner membrane. The protein localises to the cytoplasm. Its function is as follows. Regulates ATP-dependent protein translocation into the mitochondrial matrix. Involved in the uptake of thaxtomin, a phytotoxin produced by Streptomyces bacteria, that causes dramatic cell swelling, reduced seedling growth, and inhibition of cellulose synthesis. Modulates polar auxin transport. Involved in importing a negative regulator of plant immunity into mitochondria, thus protecting plants from over-accumulation of reactive oxygen species (ROS) and preventing autoimmunity. Confers sensitivity to virulent pathogens such as the oomycete H.arabidopsidis Noco2 and the bacteria P.syringae pv. maculicola ES4326. This chain is Mitochondrial import inner membrane translocase subunit PAM16 like 2, found in Arabidopsis thaliana (Mouse-ear cress).